A 63-amino-acid polypeptide reads, in one-letter code: Large ribosomal subunit protein bL28 (63 aa).

This sequence belongs to the bacterial ribosomal protein bL28 family.

This Desulfatibacillum aliphaticivorans protein is Large ribosomal subunit protein bL28.